A 374-amino-acid chain; its full sequence is tRNA-specific 2-thiouridylase MnmA (374 aa).

Residues 12-19 and Met-38 contribute to the ATP site; that span reads GMSGGVDS. An interaction with target base in tRNA region spans residues 98–100; it reads NPD. Cys-103 acts as the Nucleophile in catalysis. Cys-103 and Cys-202 are joined by a disulfide. Gly-128 contributes to the ATP binding site. The tract at residues 152 to 154 is interaction with tRNA; that stretch reads KDQ. Cys-202 (cysteine persulfide intermediate) is an active-site residue. Positions 316 to 317 are interaction with tRNA; the sequence is RY.

It belongs to the MnmA/TRMU family.

Its subcellular location is the cytoplasm. It catalyses the reaction S-sulfanyl-L-cysteinyl-[protein] + uridine(34) in tRNA + AH2 + ATP = 2-thiouridine(34) in tRNA + L-cysteinyl-[protein] + A + AMP + diphosphate + H(+). In terms of biological role, catalyzes the 2-thiolation of uridine at the wobble position (U34) of tRNA, leading to the formation of s(2)U34. The polypeptide is tRNA-specific 2-thiouridylase MnmA (Vibrio vulnificus (strain YJ016)).